Here is a 142-residue protein sequence, read N- to C-terminus: Small heat shock protein IbpB (142 aa).

Residues 25–136 (GQEPQGFPPY…QPQRIAIGTT (112 aa)) enclose the sHSP domain.

It belongs to the small heat shock protein (HSP20) family. As to quaternary structure, homodimer. Forms homomultimers of about 100-150 subunits at optimal growth temperatures. Conformation changes to oligomers at high temperatures or high ionic concentrations. The decrease in size of the multimers is accompanied by an increase in chaperone activity.

The protein resides in the cytoplasm. In terms of biological role, associates with aggregated proteins, together with IbpA, to stabilize and protect them from irreversible denaturation and extensive proteolysis during heat shock and oxidative stress. Aggregated proteins bound to the IbpAB complex are more efficiently refolded and reactivated by the ATP-dependent chaperone systems ClpB and DnaK/DnaJ/GrpE. Its activity is ATP-independent. The chain is Small heat shock protein IbpB from Serratia proteamaculans (strain 568).